Reading from the N-terminus, the 196-residue chain is Small ribosomal subunit protein uS4c (196 aa).

A disordered region spans residues 17–36 (ALPGLTRKTPKSGSNLKKKF). The 69-residue stretch at 89 to 157 (MRLDNILFRL…VQNYIASSDP (69 aa)) folds into the S4 RNA-binding domain.

The protein belongs to the universal ribosomal protein uS4 family. In terms of assembly, part of the 30S ribosomal subunit. Contacts protein S5. The interaction surface between S4 and S5 is involved in control of translational fidelity.

The protein localises to the plastid. Its subcellular location is the chloroplast. Functionally, one of the primary rRNA binding proteins, it binds directly to 16S rRNA where it nucleates assembly of the body of the 30S subunit. Its function is as follows. With S5 and S12 plays an important role in translational accuracy. The sequence is that of Small ribosomal subunit protein uS4c (rps4) from Calamagrostis epigeios (Wood small-reed grass).